The chain runs to 169 residues: Probable phospholipid hydroperoxide glutathione peroxidase (169 aa).

Residue Cys43 is part of the active site.

Belongs to the glutathione peroxidase family. In terms of tissue distribution, germinating seed, apex, flower, as well as in stressed tissues.

The protein resides in the cytoplasm. The catalysed reaction is a hydroperoxy polyunsaturated fatty acid + 2 glutathione = a hydroxy polyunsaturated fatty acid + glutathione disulfide + H2O. Its function is as follows. Protects cells and enzymes from oxidative damage, by catalyzing the reduction of hydrogen peroxide, lipid peroxides and organic hydroperoxide, by glutathione. This is Probable phospholipid hydroperoxide glutathione peroxidase from Nicotiana sylvestris (Wood tobacco).